A 289-amino-acid polypeptide reads, in one-letter code: Serine/threonine-protein phosphatase Pgam5, mitochondrial (289 aa).

A helical transmembrane segment spans residues 7–23 (FACGTGAGLAAYYLQRL).

The protein belongs to the phosphoglycerate mutase family. BPG-dependent PGAM subfamily. In terms of assembly, interacts with Pk92B/ASK1.

Its subcellular location is the mitochondrion outer membrane. The enzyme catalyses O-phospho-L-seryl-[protein] + H2O = L-seryl-[protein] + phosphate. It carries out the reaction O-phospho-L-threonyl-[protein] + H2O = L-threonyl-[protein] + phosphate. In terms of biological role, displays phosphatase activity for serine/threonine residues, and dephosphorylates and activates Pk92B kinase. Has apparently no phosphoglycerate mutase activity. The protein is Serine/threonine-protein phosphatase Pgam5, mitochondrial of Drosophila sechellia (Fruit fly).